Consider the following 581-residue polypeptide: Spastin (581 aa).

Over residues 1-12 the composition is skewed to basic residues; it reads MSSPAGRRKKKG. The interval 1–39 is disordered; that stretch reads MSSPAGRRKKKGSGGASPAPARPPPPAAVPAPAAGPAPA. The interval 1-48 is required for nuclear localization; it reads MSSPAGRRKKKGSGGASPAPARPPPPAAVPAPAAGPAPAPGSPHKRNL. The Cytoplasmic segment spans residues 1 to 54; that stretch reads MSSPAGRRKKKGSGGASPAPARPPPPAAVPAPAAGPAPAPGSPHKRNLYYFSYP. A required for interaction with ATL1 region spans residues 1-78; sequence MSSPAGRRKK…LGLLFVWLCQ (78 aa). Residues 1 to 191 are required for midbody localization; it reads MSSPAGRRKK…LVMAKDRLQL (191 aa). Residues 1 to 265 are required for interaction with RTN1; sequence MSSPAGRRKK…GTSKPNRTNK (265 aa). Residues 4-11 carry the Nuclear localization signal motif; it reads PAGRRKKK. Pro residues predominate over residues 20-39; sequence PARPPPPAAVPAPAAGPAPA. The interval 48–85 is required for interaction with SSNA1 and microtubules; it reads LYYFSYPLVVGFALLRLLACHLGLLFVWLCQRFSRALM. The segment at residues 55 to 75 is an intramembrane region (helical); that stretch reads LVVGFALLRLLACHLGLLFVW. A Nuclear export signal motif is present at residues 57-65; that stretch reads VGFALLRLL. Residues 76 to 581 lie on the Cytoplasmic side of the membrane; sequence LCQRFSRALM…WNKDFGDTTV (506 aa). The disordered stretch occupies residues 90–111; sequence SSGTAPAPASPSTPAPGPGGEA. The span at 97 to 106 shows a compositional bias: pro residues; it reads PASPSTPAPG. Residues 118-192 form the MIT domain; that stretch reads HKQAFEYISI…VMAKDRLQLL (75 aa). The tract at residues 193–581 is sufficient for microtubule severing; that stretch reads ESGAVPKKKD…WNKDFGDTTV (389 aa). The interval 195-277 is disordered; that stretch reads GAVPKKKDPL…TPTTAVRKKK (83 aa). Polar residues predominate over residues 206 to 225; it reads HASNSLPRSKTVMKSGSTGL. Residues serine 210 and serine 233 each carry the phosphoserine modification. A required for interaction with microtubules and microtubule severing region spans residues 235–293; sequence SGLSMVSGARPGSGPAATTHKGTSKPNRTNKPSTPTTAVRKKKDLKNFRNVDSNLANLI. Residues 254–271 are compositionally biased toward polar residues; it reads HKGTSKPNRTNKPSTPTT. Threonine 271 is modified (phosphothreonine). The short motif at 274 to 277 is the Nuclear localization signal element; that stretch reads RKKK. 347–354 is an ATP binding site; sequence GPPGNGKT. Serine 562 is modified (phosphoserine).

The protein belongs to the AAA ATPase family. Spastin subfamily. As to quaternary structure, homohexamer. Mostly monomeric, but assembles into hexameric structure for short periods of time. Oligomerization seems to be a prerequisite for catalytic activity. Binding to ATP in a cleft between two adjacent subunits stabilizes the homohexameric form. Binds to microtubules at least in part via the alpha-tubulin and beta-tubulin tails. The hexamer adopts a ring conformation through which microtubules pass prior to being severed. Does not interact strongly with tubulin heterodimers. Interacts (via MIT domain) with CHMP1B; the interaction is direct. Interacts with SSNA1. Interacts with ATL1. Interacts with RTN1. Interacts with ZFYVE27. Interacts with REEP1. Interacts (via MIT domain) with IST1.

Its subcellular location is the membrane. The protein resides in the endoplasmic reticulum. It is found in the midbody. It localises to the cytoplasm. The protein localises to the cytoskeleton. Its subcellular location is the microtubule organizing center. The protein resides in the centrosome. It is found in the perinuclear region. It localises to the nucleus. The protein localises to the spindle. Its subcellular location is the cell projection. The protein resides in the axon. It carries out the reaction n ATP + n H2O + a microtubule = n ADP + n phosphate + (n+1) alpha/beta tubulin heterodimers.. With respect to regulation, allosteric enzyme with a cooperative mechanism; at least two neighbor subunits influence each other strongly in spastin hexamers. Microtubule binding promotes cooperative interactions among spastin subunits. Functionally, ATP-dependent microtubule severing protein that specifically recognizes and cuts microtubules that are polyglutamylated. Preferentially recognizes and acts on microtubules decorated with short polyglutamate tails: severing activity increases as the number of glutamates per tubulin rises from one to eight, but decreases beyond this glutamylation threshold. Severing activity is not dependent on tubulin acetylation or detyrosination. Microtubule severing promotes reorganization of cellular microtubule arrays and the release of microtubules from the centrosome following nucleation. It is critical for the biogenesis and maintenance of complex microtubule arrays in axons, spindles and cilia. SPAST is involved in abscission step of cytokinesis and nuclear envelope reassembly during anaphase in cooperation with the ESCRT-III complex. Recruited at the midbody, probably by IST1, and participates in membrane fission during abscission together with the ESCRT-III complex. Recruited to the nuclear membrane by IST1 and mediates microtubule severing, promoting nuclear envelope sealing and mitotic spindle disassembly during late anaphase. Required for membrane traffic from the endoplasmic reticulum (ER) to the Golgi and endosome recycling. Recruited by IST1 to endosomes and regulates early endosomal tubulation and recycling by mediating microtubule severing. Probably plays a role in axon growth and the formation of axonal branches. The sequence is that of Spastin from Rattus norvegicus (Rat).